The primary structure comprises 960 residues: Glycine dehydrogenase (decarboxylating) (960 aa).

An N6-(pyridoxal phosphate)lysine modification is found at K709.

Belongs to the GcvP family. In terms of assembly, the glycine cleavage system is composed of four proteins: P, T, L and H. Pyridoxal 5'-phosphate serves as cofactor.

It catalyses the reaction N(6)-[(R)-lipoyl]-L-lysyl-[glycine-cleavage complex H protein] + glycine + H(+) = N(6)-[(R)-S(8)-aminomethyldihydrolipoyl]-L-lysyl-[glycine-cleavage complex H protein] + CO2. Functionally, the glycine cleavage system catalyzes the degradation of glycine. The P protein binds the alpha-amino group of glycine through its pyridoxal phosphate cofactor; CO(2) is released and the remaining methylamine moiety is then transferred to the lipoamide cofactor of the H protein. This is Glycine dehydrogenase (decarboxylating) from Hahella chejuensis (strain KCTC 2396).